A 448-amino-acid polypeptide reads, in one-letter code: MFKNIARLASMARSAPRTTASFQTRFMATTASGTASASATPATFTLQNGPVFTGRSFGANRVVSGEAVFSTGMVGYPESMTDPSYRGQILVFTQPLIGNYGVPSGKETDPFGLIKYFESPHIQCIGIVVADAALKYSHWTAVESLGEWCKREGVAAISGVDTRAIVTYLREQGSSLGRITVGEEYDAEEDAAFVDPGEINLVRRVSTKQPFHVSAAADVENPLHIAVIDCGVKENILRSLVSRGASITVFPYEYPINDIAHHFDGIFISNGPGDPTHCQQTVLNLRDIMYEKPELSELPIFGICLGHQLLALAAGAKTVKLKYGNRAHNIPALDLTTGQCHITSQNHGYAVDVNTLPAEFKPYFINLNDQSNEGMIHTEKPIFSTQFHPEAKGGPLDTSILFDKYLGQVHQYRAARKSGVDTRPNKLLVDLLPKQRIGVEIDAWDYVQ.

A mitochondrion-targeting transit peptide spans 1-27 (MFKNIARLASMARSAPRTTASFQTRFM). Residues 224-415 (HIAVIDCGVK…LGQVHQYRAA (192 aa)) form the Glutamine amidotransferase type-1 domain. The Nucleophile role is filled by Cys304. Active-site residues include His388 and Glu390.

Belongs to the CarA family. As to quaternary structure, heterodimer composed of 2 chains; the small (or glutamine) chain promotes the hydrolysis of glutamine to ammonia, which is used by the large (or ammonia) chain to synthesize carbamoyl phosphate.

Its subcellular location is the mitochondrion matrix. It catalyses the reaction hydrogencarbonate + L-glutamine + 2 ATP + H2O = carbamoyl phosphate + L-glutamate + 2 ADP + phosphate + 2 H(+). It carries out the reaction L-glutamine + H2O = L-glutamate + NH4(+). It functions in the pathway amino-acid biosynthesis; L-arginine biosynthesis; carbamoyl phosphate from bicarbonate: step 1/1. In terms of biological role, small subunit of the arginine-specific carbamoyl phosphate synthase (CPSase). CPSase catalyzes the formation of carbamoyl phosphate from the ammonia moiety of glutamine, carbonate, and phosphate donated by ATP, the first step of the arginine biosynthetic pathway. The small subunit (glutamine amidotransferase) binds and cleaves glutamine to supply the large subunit with the substrate ammonia. The sequence is that of Carbamoyl phosphate synthase arginine-specific small chain (CPA1) from Yarrowia lipolytica (strain CLIB 122 / E 150) (Yeast).